Consider the following 225-residue polypeptide: MPLYLPDDETFASFWPGDNPSLLAALQNVLRQEHSGYIYIWSREGAGRSHLLHAACAELSQRGDAVGYVPLDKRTWFVPEVLEGMEQLALVCIDNIECVAGDEPWEMAIFNLYNRILESGKTRLLITGDRPPRQLNLGLPDLASRLDWGQIYKLQPLSDEDKLQALQLRARLRGFEMPEDVCRFLLKRLDREMRSLFMTLDQLDHASITAQRKLTIPFVKEILKL.

This sequence belongs to the DnaA family. HdA subfamily. As to quaternary structure, the active form seems to be an ADP-bound monomer. Forms the RIDA complex (regulatory inactivation of DnaA) of ATP-DnaA, ADP-Hda and the DNA-loaded beta sliding clamp (dnaN).

Its function is as follows. Mediates the interaction of DNA replication initiator protein DnaA with DNA polymerase subunit beta sliding clamp (dnaN). Stimulates hydrolysis of ATP-DnaA to ADP-DnaA, rendering DnaA inactive for reinitiation, a process called regulatory inhibition of DnaA or RIDA. In Klebsiella pneumoniae (strain 342), this protein is DnaA regulatory inactivator Hda.